The primary structure comprises 187 residues: Adenine phosphoribosyltransferase (187 aa).

Belongs to the purine/pyrimidine phosphoribosyltransferase family. Homodimer.

It is found in the cytoplasm. It carries out the reaction AMP + diphosphate = 5-phospho-alpha-D-ribose 1-diphosphate + adenine. Its pathway is purine metabolism; AMP biosynthesis via salvage pathway; AMP from adenine: step 1/1. Functionally, catalyzes a salvage reaction resulting in the formation of AMP, that is energically less costly than de novo synthesis. In Burkholderia pseudomallei (strain 1106a), this protein is Adenine phosphoribosyltransferase.